A 152-amino-acid polypeptide reads, in one-letter code: Protein PLANT CADMIUM RESISTANCE 2 (152 aa).

A helical transmembrane segment spans residues 57 to 79 (TAGALYALIAVVTGCACIYSCFY).

It belongs to the cornifelin family. As to quaternary structure, homooligomer. As to expression, expressed in roots, leaves, shoots, stems, flowers and siliques. In leaves, restricted mainly to the vascular tissue. Expressed in all cells in the root tip, in the vascular tissue and the epidermis in the elongation zone, and only in the epidermal cells in the root hair zone.

It is found in the cell membrane. Zinc transporter acting in both zinc extrusion and long-distance zinc transport. Involved in the loading of zinc into the xyleme and in the detoxification of excess zinc at the epidermal cells. Acts independently from the zinc transporters HMA2 and HMA4. May be also involved in cadmium resistance. This is Protein PLANT CADMIUM RESISTANCE 2 (PCR2) from Arabidopsis thaliana (Mouse-ear cress).